Here is a 278-residue protein sequence, read N- to C-terminus: Neuronal membrane glycoprotein M6-a (278 aa).

At methionine 1 the chain carries N-acetylmethionine. Residues 1-22 (MEENMEEGQTQKGCFECCIKCL) lie on the Cytoplasmic side of the membrane. Residues 23–43 (GGIPYASLIATILLYAGVALF) traverse the membrane as a helical segment. The Extracellular portion of the chain corresponds to 44-84 (CGCGHEALSGTVNILQTYFEMARTAGDTLDVFTMIDIFKYV). The helical transmembrane segment at 85-105 (IYGIAAAFFVYGILLMVEGFF) threads the bilayer. Residues 106 to 127 (TTGAIKDLYGDFKITTCGRCVS) lie on the Cytoplasmic side of the membrane. The helical transmembrane segment at 128-148 (AWFIMLTYLFMLAWLGVTAFT) threads the bilayer. The Extracellular portion of the chain corresponds to 149–213 (SLPVYMYFNL…STELNMTFHL (65 aa)). N-linked (GlcNAc...) asparagine glycosylation occurs at asparagine 164. An intrachain disulfide couples cysteine 174 to cysteine 192. The N-linked (GlcNAc...) asparagine glycan is linked to asparagine 208. Residues 214-234 (FIVALAGAGAAVIAMVHYLMV) form a helical membrane-spanning segment. Residues 235–278 (LSANWAYVKDACRMQKYEDIKSKEEQELHDIHSTRSKERLNAYT) lie on the Cytoplasmic side of the membrane. Serine 256 carries the phosphoserine modification. A Phosphothreonine modification is found at threonine 278.

It belongs to the myelin proteolipid protein family. Interacts with OPRM1. Interacts with palmitoyltransferase ZDHHC17/HIP14; the interaction leads to palmitoylation of GPM6A. N-glycosylated. Post-translationally, palmitoylated by ZDHHC17/HIP14.

Its subcellular location is the cell membrane. It localises to the cell projection. The protein resides in the axon. It is found in the growth cone. The protein localises to the dendritic spine. Its subcellular location is the filopodium. It localises to the neuron projection. Its function is as follows. Involved in neuronal differentiation, including differentiation and migration of neuronal stem cells. Plays a role in neuronal plasticity and is involved in neurite and filopodia outgrowth, filopodia motility and probably synapse formation. GPM6A-induced filopodia formation involves mitogen-activated protein kinase (MAPK) and Src signaling pathways. May be involved in neuronal NGF-dependent Ca(2+) influx. May be involved in regulation of endocytosis and intracellular trafficking of G-protein-coupled receptors (GPCRs); may enhance internalization and recycling of mu-type opioid receptor. The polypeptide is Neuronal membrane glycoprotein M6-a (GPM6A) (Bos taurus (Bovine)).